The sequence spans 397 residues: DnaJ homolog subfamily A member 1 (397 aa).

Residues 6–68 (TYYDVLGVKP…KKRELYDKGG (63 aa)) form the J domain. Lys66 is subject to N6-acetyllysine. Ser83 carries the post-translational modification Phosphoserine. A CR-type zinc finger spans residues 121–205 (GATRKLALQK…CNGRKIVREK (85 aa)). Zn(2+) contacts are provided by Cys134, Cys137, Cys150, Cys153, Cys177, Cys180, Cys193, and Cys196. CXXCXGXG motif repeat units follow at residues 134–141 (CDKCEGRG), 150–157 (CPNCRGTG), 177–184 (CMECQGHG), and 193–200 (CKSCNGRK). Ser335 is modified (phosphoserine). Residues 352 to 397 (VEETDEMDQVELVDFDPNQERRRHYNGEAYEDDEHHPRGGVQCQTS) form a disordered region. A compositionally biased stretch (acidic residues) spans 353–365 (EETDEMDQVELVD). The residue at position 381 (Tyr381) is a Phosphotyrosine. Residue Cys394 is modified to Cysteine methyl ester. The S-farnesyl cysteine moiety is linked to residue Cys394. The propeptide at 395–397 (QTS) is removed in mature form.

Identified in a complex with HSPA1B and BAX. Interacts with RNF207.

Its subcellular location is the membrane. It is found in the cytoplasm. The protein localises to the microsome. It localises to the mitochondrion. The protein resides in the nucleus. Its subcellular location is the perinuclear region. Functionally, co-chaperone for HSPA8/Hsc70. Plays a role in protein transport into mitochondria via its role as co-chaperone. Stimulates ATP hydrolysis, but not the folding of unfolded proteins mediated by HSPA1A (in vitro). Promotes apoptosis in response to cellular stress mediated by exposure to anisomycin or UV. Functions as co-chaperone for HSPA1B and negatively regulates the translocation of BAX from the cytosol to mitochondria in response to cellular stress, thereby protecting cells against apoptosis. The sequence is that of DnaJ homolog subfamily A member 1 (Dnaja1) from Mus musculus (Mouse).